We begin with the raw amino-acid sequence, 344 residues long: D-amino-acid oxidase (344 aa).

Alanine 11, serine 14, serine 49, glycine 53, asparagine 55, and isoleucine 167 together coordinate FAD. Residues tyrosine 229 and arginine 290 each contribute to the (R)-lactate site. Anthranilate-binding residues include tyrosine 229 and arginine 290. Arginine 290, serine 321, glycine 324, tyrosine 325, and glutamine 326 together coordinate FAD.

This sequence belongs to the DAMOX/DASOX family. FAD serves as cofactor.

The protein resides in the peroxisome. The enzyme catalyses a D-alpha-amino acid + O2 + H2O = a 2-oxocarboxylate + H2O2 + NH4(+). The catalysed reaction is D-alanine + O2 + H2O = pyruvate + H2O2 + NH4(+). Catalyzes the oxidative deamination of D-amino acids with broad substrate specificity. Enables the organism to utilize D-amino acids as a source of nutrients. Enables the organism to utilize D-alanine as a source of nitrogen. The polypeptide is D-amino-acid oxidase (Komagataella phaffii (strain GS115 / ATCC 20864) (Yeast)).